The primary structure comprises 341 residues: Phosphoribosylformylglycinamidine cyclo-ligase (341 aa).

It belongs to the AIR synthase family.

The protein resides in the cytoplasm. The catalysed reaction is 2-formamido-N(1)-(5-O-phospho-beta-D-ribosyl)acetamidine + ATP = 5-amino-1-(5-phospho-beta-D-ribosyl)imidazole + ADP + phosphate + H(+). It functions in the pathway purine metabolism; IMP biosynthesis via de novo pathway; 5-amino-1-(5-phospho-D-ribosyl)imidazole from N(2)-formyl-N(1)-(5-phospho-D-ribosyl)glycinamide: step 2/2. The protein is Phosphoribosylformylglycinamidine cyclo-ligase of Synechococcus elongatus (strain ATCC 33912 / PCC 7942 / FACHB-805) (Anacystis nidulans R2).